Reading from the N-terminus, the 261-residue chain is MKWLNSLWIAFSMYSKIRVPMKEWEESSMRYAICFFPLIGAVIGGVFFLTFQIGHLLKLGDILIAALLTSIPILISGGIHMDGYCDTMDAISSYQSKERRLEILKDPHSGAFAIIRSGVYFLLYFGMVSVLTLKSSIIIAIFFVVSRALSGLAVVQFKTAKSNGLVATFQQAAHKRKVTISMVIYLVITVIGMLLVSPILTVVGMLTALLCFIRYKKLAYQLFGGTTGDLAGYFLVRCELMAGLAVVIAEGVIIYGTGHWW.

5 helical membrane-spanning segments follow: residues 31–51, 59–79, 125–145, 183–203, and 240–260; these read YAIC…FLTF, LGDI…SGGI, FGMV…FFVV, VIYL…LTVV, and LMAG…TGHW.

The protein belongs to the CobS family. Requires Mg(2+) as cofactor.

The protein resides in the cell membrane. It carries out the reaction alpha-ribazole + adenosylcob(III)inamide-GDP = adenosylcob(III)alamin + GMP + H(+). It catalyses the reaction alpha-ribazole 5'-phosphate + adenosylcob(III)inamide-GDP = adenosylcob(III)alamin 5'-phosphate + GMP + H(+). It participates in cofactor biosynthesis; adenosylcobalamin biosynthesis; adenosylcobalamin from cob(II)yrinate a,c-diamide: step 7/7. Joins adenosylcobinamide-GDP and alpha-ribazole to generate adenosylcobalamin (Ado-cobalamin). Also synthesizes adenosylcobalamin 5'-phosphate from adenosylcobinamide-GDP and alpha-ribazole 5'-phosphate. This chain is Adenosylcobinamide-GDP ribazoletransferase, found in Lachnoclostridium phytofermentans (strain ATCC 700394 / DSM 18823 / ISDg) (Clostridium phytofermentans).